A 326-amino-acid chain; its full sequence is rRNA 2'-O-methyltransferase fibrillarin (326 aa).

The disordered stretch occupies residues 1-84 (MAFQPGSRGG…GGARGGAKGG (84 aa)). Gly residues predominate over residues 7 to 83 (SRGGRGGARG…RGGARGGAKG (77 aa)). Asymmetric dimethylarginine occurs at positions 8, 11, 15, 19, 23, 26, 32, 36, 39, 45, 49, 55, 59, 63, 67, 71, 74, and 78. Residues 180–181 (TS), 199–200 (EF), 224–225 (DA), and 244–247 (DVAQ) contribute to the S-adenosyl-L-methionine site.

The protein belongs to the methyltransferase superfamily. Fibrillarin family. In terms of assembly, component of box C/D small nucleolar ribonucleoprotein (snoRNP) particles that contain SNU13, NOP1, SIK1/NOP56 and NOP58, plus a guide RNA. Post-translationally, by homology to other fibrillarins, some or all of the N-terminal domain arginines are modified to asymmetric dimethylarginine (DMA).

The protein localises to the nucleus. The protein resides in the nucleolus. The catalysed reaction is L-glutaminyl-[histone H2A] + S-adenosyl-L-methionine = N(5)-methyl-L-glutaminyl-[histone H2A] + S-adenosyl-L-homocysteine + H(+). S-adenosyl-L-methionine-dependent methyltransferase that has the ability to methylate both RNAs and proteins. Involved in pre-rRNA processing. Utilizes the methyl donor S-adenosyl-L-methionine to catalyze the site-specific 2'-hydroxyl methylation of ribose moieties in pre-ribosomal RNA. Site specificity is provided by a guide RNA that base pairs with the substrate. Methylation occurs at a characteristic distance from the sequence involved in base pairing with the guide RNA. Also acts as a protein methyltransferase by mediating methylation of 'Gln-105' of histone H2A (H2AQ105me), a modification that impairs binding of the FACT complex and is specifically present at 35S ribosomal DNA locus. The chain is rRNA 2'-O-methyltransferase fibrillarin (NOP1) from Eremothecium gossypii (strain ATCC 10895 / CBS 109.51 / FGSC 9923 / NRRL Y-1056) (Yeast).